The sequence spans 358 residues: Leukotriene B4 receptor 2 (358 aa).

The Extracellular segment spans residues 1-24 (MSVCYRPPGNETLLSWKTSRATGT). N-linked (GlcNAc...) asparagine glycosylation is present at N10. A helical transmembrane segment spans residues 25-45 (AFLLLAALLGLPGNGFVVWSL). Residues 46-60 (AGWRPARGRPLAATL) lie on the Cytoplasmic side of the membrane. Residues 61–81 (VLHLALADGAVLLLTPLFVAF) form a helical membrane-spanning segment. The Extracellular segment spans residues 82 to 96 (LTRQAWPLGQAGCKA). Residues 97–117 (VYYVCALSMYASVLLTGLLSL) traverse the membrane as a helical segment. Residues 118-140 (QRCLAVTRPFLAPRLRSPALARR) are Cytoplasmic-facing. A helical transmembrane segment spans residues 141–161 (LLLAVWLAALLLAVPAAVYRH). The Extracellular segment spans residues 162–185 (LWRDRVCQLCHPSPVHAAAHLSLE). The helical transmembrane segment at 186–206 (TLTAFVLPFGLMLGCYSVTLA) threads the bilayer. The Cytoplasmic segment spans residues 207–224 (RLRGARWGSGRHGARVGR). The chain crosses the membrane as a helical span at residues 225 to 245 (LVSAIVLAFGLLWAPYHAVNL). Residues 246–275 (LQAVAALAPPEGALAKLGGAGQAARAGTTA) are Extracellular-facing. A helical transmembrane segment spans residues 276-296 (LAFFSSSVNPVLYVFTAGDLL). Over 297–358 (PRAGPRFLTR…MEKDGPEWDL (62 aa)) the chain is Cytoplasmic. Residues 311-358 (SGEARGGGRSREGTMELRTTPQLKVVGQGRGNGDPGGGMEKDGPEWDL) are disordered. Residues 338 to 348 (QGRGNGDPGGG) are compositionally biased toward gly residues. Basic and acidic residues predominate over residues 349–358 (MEKDGPEWDL).

It belongs to the G-protein coupled receptor 1 family. Widely expressed.

The protein resides in the cell membrane. Functionally, low-affinity receptor for leukotrienes including leukotriene B4. Mediates chemotaxis of granulocytes and macrophages. The response is mediated via G-proteins that activate a phosphatidylinositol-calcium second messenger system. The rank order of affinities for the leukotrienes is LTB4 &gt; 12-epi-LTB4 &gt; LTB5 &gt; LTB3. The protein is Leukotriene B4 receptor 2 (LTB4R2) of Homo sapiens (Human).